The sequence spans 460 residues: NADH-ubiquinone oxidoreductase chain 4 (460 aa).

Helical transmembrane passes span 20–42, 61–81, 94–113, 117–139, 148–168, 195–215, 225–245, 258–278, 285–304, 308–330, 351–371, 394–414, and 436–456; these read AKWLWTTSIAQSLIIALASLSWL, PLSTPLLVLTCWLLPLMILAS, RAYISLLVSLQTFLVLAFGA, IMFYVMFEATLLPTLIIITRWGN, TYFLFYTLAGSLPLLVALLLM, LWWAACLLAFLVKMPLYGVHL, PIAGSMILAAVLLKLGGYGMM, LAYPFIVLALWGIIMTGSICL, SLIAYSSVGHMGLVAGGILI, WGFTGAIILMIAHGLASSALFCL, MILPLMTTWWFVASLANLALP, LILTGLGTLITASYSLYLFLM, and LLIILHLIPIVLLILKPELMW.

This sequence belongs to the complex I subunit 4 family.

It localises to the mitochondrion membrane. The enzyme catalyses a ubiquinone + NADH + 5 H(+)(in) = a ubiquinol + NAD(+) + 4 H(+)(out). Its function is as follows. Core subunit of the mitochondrial membrane respiratory chain NADH dehydrogenase (Complex I) that is believed to belong to the minimal assembly required for catalysis. Complex I functions in the transfer of electrons from NADH to the respiratory chain. The immediate electron acceptor for the enzyme is believed to be ubiquinone. This chain is NADH-ubiquinone oxidoreductase chain 4 (MT-ND4), found in Oncorhynchus mykiss (Rainbow trout).